The chain runs to 51 residues: Large ribosomal subunit protein eL39 (51 aa).

Basic residues predominate over residues 1–15 (MPSHKSFRTKQKLAK). A disordered region spans residues 1-21 (MPSHKSFRTKQKLAKAARQNR).

This sequence belongs to the eukaryotic ribosomal protein eL39 family. Component of the large ribosomal subunit (LSU). Mature yeast ribosomes consist of a small (40S) and a large (60S) subunit. The 40S small subunit contains 1 molecule of ribosomal RNA (18S rRNA) and at least 33 different proteins. The large 60S subunit contains 3 rRNA molecules (25S, 5.8S and 5S rRNA) and at least 46 different proteins. eL39 interacts with yih1.

It is found in the cytoplasm. Component of the ribosome, a large ribonucleoprotein complex responsible for the synthesis of proteins in the cell. The small ribosomal subunit (SSU) binds messenger RNAs (mRNAs) and translates the encoded message by selecting cognate aminoacyl-transfer RNA (tRNA) molecules. The large subunit (LSU) contains the ribosomal catalytic site termed the peptidyl transferase center (PTC), which catalyzes the formation of peptide bonds, thereby polymerizing the amino acids delivered by tRNAs into a polypeptide chain. The nascent polypeptides leave the ribosome through a tunnel in the LSU and interact with protein factors that function in enzymatic processing, targeting, and the membrane insertion of nascent chains at the exit of the ribosomal tunnel. This chain is Large ribosomal subunit protein eL39 (rpl39), found in Schizosaccharomyces pombe (strain 972 / ATCC 24843) (Fission yeast).